The sequence spans 158 residues: Methylated-DNA--protein-cysteine methyltransferase (158 aa).

The active-site Nucleophile; methyl group acceptor is Cys-126.

This sequence belongs to the MGMT family.

The protein resides in the cytoplasm. The catalysed reaction is a 6-O-methyl-2'-deoxyguanosine in DNA + L-cysteinyl-[protein] = S-methyl-L-cysteinyl-[protein] + a 2'-deoxyguanosine in DNA. The enzyme catalyses a 4-O-methyl-thymidine in DNA + L-cysteinyl-[protein] = a thymidine in DNA + S-methyl-L-cysteinyl-[protein]. In terms of biological role, involved in the cellular defense against the biological effects of O6-methylguanine (O6-MeG) and O4-methylthymine (O4-MeT) in DNA. Repairs the methylated nucleobase in DNA by stoichiometrically transferring the methyl group to a cysteine residue in the enzyme. This is a suicide reaction: the enzyme is irreversibly inactivated. This Methanosarcina mazei (strain ATCC BAA-159 / DSM 3647 / Goe1 / Go1 / JCM 11833 / OCM 88) (Methanosarcina frisia) protein is Methylated-DNA--protein-cysteine methyltransferase.